The chain runs to 108 residues: MILQRLFRFSSVIRSAVSVHLRRNIGVTAVAFNKELDPIQKLFVDKIREYKSKRQTSGGPVDASSEYQQELERELFKLKQMFGNADMNTFPTFKFEDPKFEVIEKPQA.

The transit peptide at 1–32 (MILQRLFRFSSVIRSAVSVHLRRNIGVTAVAF) directs the protein to the mitochondrion. N6-acetyllysine is present on residues Lys41 and Lys46. Phosphoserine is present on Ser65. At Lys79 the chain carries N6-acetyllysine. Lys94 and Lys99 each carry N6-acetyllysine; alternate. Residues Lys94 and Lys99 each carry the N6-succinyllysine; alternate modification. Residue Lys105 is modified to N6-acetyllysine.

Belongs to the eukaryotic ATPase subunit F6 family. In terms of assembly, component of the ATP synthase complex composed at least of ATP5F1A/subunit alpha, ATP5F1B/subunit beta, ATP5MC1/subunit c (homooctomer), MT-ATP6/subunit a, MT-ATP8/subunit 8, ATP5ME/subunit e, ATP5MF/subunit f, ATP5MG/subunit g, ATP5MK/subunit k, ATP5MJ/subunit j, ATP5F1C/subunit gamma, ATP5F1D/subunit delta, ATP5F1E/subunit epsilon, ATP5PF/subunit F6, ATP5PB/subunit b, ATP5PD/subunit d, ATP5PO/subunit OSCP. ATP synthase complex consists of a soluble F(1) head domain (subunits alpha(3) and beta(3)) - the catalytic core - and a membrane F(0) domain - the membrane proton channel (subunits c, a, 8, e, f, g, k and j). These two domains are linked by a central stalk (subunits gamma, delta, and epsilon) rotating inside the F1 region and a stationary peripheral stalk (subunits F6, b, d, and OSCP).

The protein localises to the mitochondrion. Its subcellular location is the mitochondrion inner membrane. In terms of biological role, subunit F6, of the mitochondrial membrane ATP synthase complex (F(1)F(0) ATP synthase or Complex V) that produces ATP from ADP in the presence of a proton gradient across the membrane which is generated by electron transport complexes of the respiratory chain. ATP synthase complex consist of a soluble F(1) head domain - the catalytic core - and a membrane F(1) domain - the membrane proton channel. These two domains are linked by a central stalk rotating inside the F(1) region and a stationary peripheral stalk. During catalysis, ATP synthesis in the catalytic domain of F(1) is coupled via a rotary mechanism of the central stalk subunits to proton translocation. In vivo, can only synthesize ATP although its ATP hydrolase activity can be activated artificially in vitro. Part of the complex F(0) domain. Part of the complex F(0) domain and the peripheric stalk, which acts as a stator to hold the catalytic alpha(3)beta(3) subcomplex and subunit a/ATP6 static relative to the rotary elements. The chain is ATP synthase peripheral stalk subunit F6, mitochondrial from Homo sapiens (Human).